Reading from the N-terminus, the 555-residue chain is Phosphomethylpyrimidine synthase (555 aa).

Residues N191, M220, Y249, H285, 305–307 (SRG), 346–349 (DGLR), and E385 contribute to the substrate site. Residue H389 coordinates Zn(2+). Substrate is bound at residue Y412. Position 453 (H453) interacts with Zn(2+). Residues C533, C536, and C541 each contribute to the [4Fe-4S] cluster site.

This sequence belongs to the ThiC family. In terms of assembly, homodimer. [4Fe-4S] cluster is required as a cofactor.

The catalysed reaction is 5-amino-1-(5-phospho-beta-D-ribosyl)imidazole + S-adenosyl-L-methionine = 4-amino-2-methyl-5-(phosphooxymethyl)pyrimidine + CO + 5'-deoxyadenosine + formate + L-methionine + 3 H(+). The protein operates within cofactor biosynthesis; thiamine diphosphate biosynthesis. Its function is as follows. Catalyzes the synthesis of the hydroxymethylpyrimidine phosphate (HMP-P) moiety of thiamine from aminoimidazole ribotide (AIR) in a radical S-adenosyl-L-methionine (SAM)-dependent reaction. In Ehrlichia ruminantium (strain Gardel), this protein is Phosphomethylpyrimidine synthase.